We begin with the raw amino-acid sequence, 272 residues long: Glutamate racemase (272 aa).

Substrate contacts are provided by residues 13 to 14 and 45 to 46; these read DS and YG. Catalysis depends on cysteine 76, which acts as the Proton donor/acceptor. 77–78 is a binding site for substrate; the sequence is NT. Cysteine 186 acts as the Proton donor/acceptor in catalysis. Residue 187-188 coordinates substrate; it reads TH.

It belongs to the aspartate/glutamate racemases family.

It carries out the reaction L-glutamate = D-glutamate. It functions in the pathway cell wall biogenesis; peptidoglycan biosynthesis. Its function is as follows. Provides the (R)-glutamate required for cell wall biosynthesis. The protein is Glutamate racemase of Cupriavidus pinatubonensis (strain JMP 134 / LMG 1197) (Cupriavidus necator (strain JMP 134)).